We begin with the raw amino-acid sequence, 72 residues long: Prokaryotic ubiquitin-like protein Pup (72 aa).

Residues 1-10 (MATKDTGGGQ) show a composition bias toward gly residues. A disordered region spans residues 1–45 (MATKDTGGGQQKATRSTEEVEEQAQDAQASEDLKERQEKLSDDVD). The stretch at 10 to 60 (QQKATRSTEEVEEQAQDAQASEDLKERQEKLSDDVDSVLDEIDDVLEENAE) forms a coiled coil. Positions 28–66 (QASEDLKERQEKLSDDVDSVLDEIDDVLEENAEDFVRSF) are ARC ATPase binding. Basic and acidic residues predominate over residues 31–42 (EDLKERQEKLSD). Residue glutamate 72 forms an Isoglutamyl lysine isopeptide (Glu-Lys) (interchain with K-? in acceptor proteins) linkage.

This sequence belongs to the prokaryotic ubiquitin-like protein family. As to quaternary structure, strongly interacts with the proteasome-associated ATPase ARC through a hydrophobic interface; the interacting region of Pup lies in its C-terminal half. There is one Pup binding site per ARC hexamer ring.

Its pathway is protein degradation; proteasomal Pup-dependent pathway. In terms of biological role, protein modifier that is covalently attached to lysine residues of substrate proteins, thereby targeting them for proteasomal degradation. The tagging system is termed pupylation. This chain is Prokaryotic ubiquitin-like protein Pup, found in Streptomyces coelicolor (strain ATCC BAA-471 / A3(2) / M145).